Reading from the N-terminus, the 176-residue chain is Transcriptional repressor NrdR (176 aa).

A zinc finger lies at Cys3–Cys34. The ATP-cone domain maps to Ile49–Asp139. The interval Gly151–Gln176 is disordered. Polar residues predominate over residues Ala167 to Gln176.

This sequence belongs to the NrdR family. Requires Zn(2+) as cofactor.

Its function is as follows. Negatively regulates transcription of bacterial ribonucleotide reductase nrd genes and operons by binding to NrdR-boxes. This is Transcriptional repressor NrdR from Acaryochloris marina (strain MBIC 11017).